A 618-amino-acid polypeptide reads, in one-letter code: Glucose starvation modulator protein 1 (618 aa).

Residues 20–48 (CEFCHTKHIQCDVGRPCQNCLKRNIGKFC) constitute a DNA-binding region (zn(2)-C6 fungal-type). The interval 325-352 (ANANTHPSHNAKLESECDSSSHSDADLE) is disordered. The segment covering 335–352 (AKLESECDSSSHSDADLE) has biased composition (basic and acidic residues). The PAS domain maps to 466-538 (LLDLENMAKL…QIFNELLAFG (73 aa)).

The protein belongs to the ERT1/acuK family.

Its subcellular location is the nucleus. Functionally, transcription factor which regulates nonfermentable carbon utilization. Binds specifically to 5'-CGGN(8)CGG-3' and 5'-CGGN(9)CGG-3' sequences in the promoter region. The chain is Glucose starvation modulator protein 1 (GSM1) from Saccharomyces cerevisiae (strain ATCC 204508 / S288c) (Baker's yeast).